Here is a 169-residue protein sequence, read N- to C-terminus: Ribosome maturation factor RimM (169 aa).

The PRC barrel domain maps to 97 to 169 (PGEYYWYQLI…VITVDWDMNF (73 aa)).

Belongs to the RimM family. As to quaternary structure, binds ribosomal protein uS19.

The protein resides in the cytoplasm. Its function is as follows. An accessory protein needed during the final step in the assembly of 30S ribosomal subunit, possibly for assembly of the head region. Essential for efficient processing of 16S rRNA. May be needed both before and after RbfA during the maturation of 16S rRNA. It has affinity for free ribosomal 30S subunits but not for 70S ribosomes. The chain is Ribosome maturation factor RimM from Legionella pneumophila subsp. pneumophila (strain Philadelphia 1 / ATCC 33152 / DSM 7513).